The sequence spans 444 residues: Methylenetetrahydrofolate--tRNA-(uracil-5-)-methyltransferase TrmFO (444 aa).

Position 10-15 (10-15 (GAGLAG)) interacts with FAD.

This sequence belongs to the MnmG family. TrmFO subfamily. FAD is required as a cofactor.

It is found in the cytoplasm. The enzyme catalyses uridine(54) in tRNA + (6R)-5,10-methylene-5,6,7,8-tetrahydrofolate + NADH + H(+) = 5-methyluridine(54) in tRNA + (6S)-5,6,7,8-tetrahydrofolate + NAD(+). It catalyses the reaction uridine(54) in tRNA + (6R)-5,10-methylene-5,6,7,8-tetrahydrofolate + NADPH + H(+) = 5-methyluridine(54) in tRNA + (6S)-5,6,7,8-tetrahydrofolate + NADP(+). Functionally, catalyzes the folate-dependent formation of 5-methyl-uridine at position 54 (M-5-U54) in all tRNAs. In Streptococcus mutans serotype c (strain ATCC 700610 / UA159), this protein is Methylenetetrahydrofolate--tRNA-(uracil-5-)-methyltransferase TrmFO.